Consider the following 101-residue polypeptide: MSHLRIAVIFLCTLFALTAGAEESCQVGGLTIPVGKTQQDRCTLYECTMESNRVVLKSMICAEQSLRRGCKRVPAQATAPFPDCCPTTLCRGRQWDRPRTL.

A signal peptide spans 1–20 (MSHLRIAVIFLCTLFALTAG).

Belongs to the scorpion La1-like peptide family. Post-translationally, contains 4 disulfide bonds. Expressed by the venom gland.

It is found in the secreted. This Pandinus cavimanus (Tanzanian red clawed scorpion) protein is Venom peptide Pc.